We begin with the raw amino-acid sequence, 568 residues long: Oxygen-dependent choline dehydrogenase (568 aa).

8–37 contributes to the FAD binding site; sequence DYIIIGAGSAGNTLAARLTEDAGVTVLLLE. Histidine 477 acts as the Proton acceptor in catalysis.

The protein belongs to the GMC oxidoreductase family. Requires FAD as cofactor.

The enzyme catalyses choline + A = betaine aldehyde + AH2. The catalysed reaction is betaine aldehyde + NAD(+) + H2O = glycine betaine + NADH + 2 H(+). It functions in the pathway amine and polyamine biosynthesis; betaine biosynthesis via choline pathway; betaine aldehyde from choline (cytochrome c reductase route): step 1/1. Its function is as follows. Involved in the biosynthesis of the osmoprotectant glycine betaine. Catalyzes the oxidation of choline to betaine aldehyde and betaine aldehyde to glycine betaine at the same rate. The chain is Oxygen-dependent choline dehydrogenase from Pseudomonas syringae pv. tomato (strain ATCC BAA-871 / DC3000).